The following is a 410-amino-acid chain: Na(+)-translocating NADH-quinone reductase subunit B (410 aa).

3 helical membrane-spanning segments follow: residues 56-76 (MMILVWLALFPAMFYGMYNVG), 119-139 (LFGAIYFLPIYATVFIVGGFW), and 159-179 (SILFALIVPPTLPLWQAALGI). Position 232 is an FMN phosphoryl threonine (threonine 232). 5 consecutive transmembrane segments (helical) span residues 266–286 (GSIGEVSTLALLIGGAFIVFA), 293–313 (IIAGVMIGMIAMSSLFNFIGS), 318–338 (MFAMPWYWHLVVGGFAIGMLF), 347–367 (SFTNVGKWWYGALIGVMCVLI), and 377–397 (GMMLAILFANLFAPIFDYFVA).

Belongs to the NqrB/RnfD family. As to quaternary structure, composed of six subunits; NqrA, NqrB, NqrC, NqrD, NqrE and NqrF. FMN serves as cofactor.

It is found in the cell inner membrane. The enzyme catalyses a ubiquinone + n Na(+)(in) + NADH + H(+) = a ubiquinol + n Na(+)(out) + NAD(+). NQR complex catalyzes the reduction of ubiquinone-1 to ubiquinol by two successive reactions, coupled with the transport of Na(+) ions from the cytoplasm to the periplasm. NqrA to NqrE are probably involved in the second step, the conversion of ubisemiquinone to ubiquinol. The polypeptide is Na(+)-translocating NADH-quinone reductase subunit B (Neisseria meningitidis serogroup A / serotype 4A (strain DSM 15465 / Z2491)).